The primary structure comprises 360 residues: Serine/threonine-protein kinase SRK2H (360 aa).

Residues tyrosine 4–tyrosine 260 enclose the Protein kinase domain. ATP-binding positions include leucine 10–alanine 18 and lysine 33. Aspartate 123 functions as the Proton acceptor in the catalytic mechanism. Residues glutamate 298 to alanine 360 form a disordered region. Acidic residues predominate over residues aspartate 313–glutamate 343. Residues tyrosine 344 to alanine 360 are compositionally biased toward basic and acidic residues.

Belongs to the protein kinase superfamily. Ser/Thr protein kinase family. Expressed in seedlings.

It catalyses the reaction L-seryl-[protein] + ATP = O-phospho-L-seryl-[protein] + ADP + H(+). The catalysed reaction is L-threonyl-[protein] + ATP = O-phospho-L-threonyl-[protein] + ADP + H(+). This chain is Serine/threonine-protein kinase SRK2H (SRK2H), found in Arabidopsis thaliana (Mouse-ear cress).